The chain runs to 264 residues: Small ribosomal subunit protein mS23 (264 aa).

The interval 233-264 is disordered; that stretch reads ARTSNPAGSWKDDTTLNTAQEEESTTSENLHF.

The protein belongs to the mitochondrion-specific ribosomal protein mS23 family. In terms of assembly, component of the mitochondrial small ribosomal subunit. Mature mitochondrial ribosomes consist of a small (37S) and a large (54S) subunit. The 37S subunit contains at least 33 different proteins and 1 molecule of RNA (15S). The 54S subunit contains at least 45 different proteins and 1 molecule of RNA (21S).

It is found in the mitochondrion. The polypeptide is Small ribosomal subunit protein mS23 (RSM25) (Saccharomyces cerevisiae (strain YJM789) (Baker's yeast)).